The sequence spans 488 residues: MAKREHQDQTGDSRPSKKSKGTKDTKKNTEVSPPYFQSPALDNVPQTEIDKFLSDHSIKITDASADKPSLRPIISFSFLPPSNKDLYAPLDGFASPTAIQSATWPLLFAGRDVIGIAETGSGKTLAFGLPCLKKVLDLKTKQKSCRPLAVVISPTRELAMQIYDQLVKFAEKVDIQVACIFGGVKKDEQREALKSAAVVVATPGRLKDLQNDGSLDLGRVKYLVLDEADRMLDKGFEQDIKDIISPMPVSKRQTVMFTATWPPIVRNLASTFMTSPVTVTIGGDPSADPRANSRIKQVVEVVKPHEKEQRLVQILNRHQRGTPDKVLAFCLYKKEAMRVERLLRTKGFKVAGIHGDLSQQERFRSLEAFKSGAATVLVATDVAARGLDIPHVKLVVNVTFPLTVEDYVHRIGRTGRAGADGHAITLFTETDKAQSGALINVLKAANQEVPEALLKFGSTVKKKQHDAYGAFFKDVEPGKAATKIVFDD.

The span at 1–29 (MAKREHQDQTGDSRPSKKSKGTKDTKKNT) shows a compositional bias: basic and acidic residues. Residues 1–42 (MAKREHQDQTGDSRPSKKSKGTKDTKKNTEVSPPYFQSPALD) are disordered. The Q motif motif lies at 92–100 (GFASPTAIQ). The Helicase ATP-binding domain occupies 104-279 (WPLLFAGRDV…STFMTSPVTV (176 aa)). An ATP-binding site is contributed by 117–124 (AETGSGKT). Positions 226 to 229 (DEAD) match the DEAD box motif. Positions 306-457 (EKEQRLVQIL…EVPEALLKFG (152 aa)) constitute a Helicase C-terminal domain.

Belongs to the DEAD box helicase family. DDX5/DBP2 subfamily.

Its subcellular location is the nucleus. It is found in the nucleolus. The enzyme catalyses ATP + H2O = ADP + phosphate + H(+). Functionally, ATP-dependent RNA helicase required for 60S ribosomal subunit synthesis. Involved in efficient pre-rRNA processing, predominantly at site A3, which is necessary for the normal formation of 25S and 5.8S rRNAs. The polypeptide is ATP-dependent RNA helicase dbp3 (dbp3) (Emericella nidulans (strain FGSC A4 / ATCC 38163 / CBS 112.46 / NRRL 194 / M139) (Aspergillus nidulans)).